Reading from the N-terminus, the 854-residue chain is Espin (854 aa).

9 ANK repeats span residues 1–31 (MALE…GPSL), 35–64 (LDAL…LPAA), 69–99 (NGAT…RVQD), 103–133 (SGAT…DPTA), 137–167 (MGAL…GVNA), 171–201 (NGAT…DPHA), 205–235 (DGMT…SLSE), 239–268 (DGAT…EISA), and 271–300 (WGGT…ELDV). 2 positions are modified to phosphoserine: serine 338 and serine 342. The segment covering 338–349 (SRDPSAELEAKQ) has biased composition (basic and acidic residues). Disordered stretches follow at residues 338–400 (SRDP…CGLS), 415–474 (NPEL…MQTK), 487–713 (KELS…AGFQ), 765–788 (KMQE…SMPA), and 800–832 (EERE…TLGY). A compositionally biased stretch (polar residues) spans 352–377 (SGMSSPNTTVSVQPLNFDLSSPTSTL). A compositionally biased stretch (low complexity) spans 378-389 (SNYDSCSSSHSS). Residues 428–463 (PTPPPPPPSFPPPPPPPGTQLPPPPPGYPAPKPPVG) show a composition bias toward pro residues. Residues 487-505 (KELSSCDGHDGLRRQDSSR) show a composition bias toward basic and acidic residues. Serine 515 carries the post-translational modification Phosphoserine. Over residues 595–620 (LPPPPPPPPPPLPEAASSPPPAPPLP) the composition is skewed to pro residues. Positions 633-642 (SSSSTGSTKS) are enriched in low complexity. Composition is skewed to polar residues over residues 643-652 (FNMMSPTGDN) and 667-678 (PTPQSKGLTTVF). Serine 647 carries the post-translational modification Phosphoserine. The WH2 domain occupies 651–668 (DNSELLAEIKAGKSLKPT). Phosphoserine occurs at positions 690 and 696. The segment covering 692-703 (LPSVSPALSPVR) has biased composition (low complexity). Residues 756–830 (QVMVRKMQLK…KEQSEKLRTL (75 aa)) adopt a coiled-coil conformation.

As to quaternary structure, monomer. Binds F-actin in a Ca(2+)-resistant fashion. Interacts (via N-terminus) with BAIAP2 (via SH3-domain). Interacts with PFN2. Interacts with MYO3A (via C-terminus). Interacts with MYO3B (via C-terminus).

Its subcellular location is the cytoplasm. The protein resides in the cytoskeleton. The protein localises to the cell projection. It is found in the stereocilium. It localises to the microvillus. Its function is as follows. Multifunctional actin-bundling protein. Plays a major role in regulating the organization, dimension, dynamics and signaling capacities of the actin filament-rich microvilli in the mechanosensory and chemosensory cells. Required for the assembly and stabilization of the stereociliary parallel actin bundles. Plays a crucial role in the formation and maintenance of inner ear hair cell stereocilia. Involved in the elongation of actin in stereocilia. In extrastriolar hair cells, required for targeting MYO3B to stereocilia tips, and for regulation of stereocilia diameter and staircase formation. The polypeptide is Espin (ESPN) (Homo sapiens (Human)).